The primary structure comprises 278 residues: Biotin synthase (278 aa).

The Radical SAM core domain occupies 1-227; sequence MQIMLCAISN…NAHIMVAGGR (227 aa). The [4Fe-4S] cluster site is built by C16, C20, and C23. Residues C60, C95, and C153 each contribute to the [2Fe-2S] cluster site.

This sequence belongs to the radical SAM superfamily. Biotin synthase family. In terms of assembly, homodimer. [4Fe-4S] cluster is required as a cofactor. It depends on [2Fe-2S] cluster as a cofactor.

The enzyme catalyses (4R,5S)-dethiobiotin + (sulfur carrier)-SH + 2 reduced [2Fe-2S]-[ferredoxin] + 2 S-adenosyl-L-methionine = (sulfur carrier)-H + biotin + 2 5'-deoxyadenosine + 2 L-methionine + 2 oxidized [2Fe-2S]-[ferredoxin]. It participates in cofactor biosynthesis; biotin biosynthesis; biotin from 7,8-diaminononanoate: step 2/2. Functionally, catalyzes the conversion of dethiobiotin (DTB) to biotin by the insertion of a sulfur atom into dethiobiotin via a radical-based mechanism. This is Biotin synthase from Campylobacter lari (strain RM2100 / D67 / ATCC BAA-1060).